The chain runs to 1795 residues: Type III effector AvrE (1795 aa).

Over residues 1-18 (MQSPSIHRNTGSIIQPTV) the composition is skewed to polar residues. The interval 1 to 227 (MQSPSIHRNT…PPREPMLWRS (227 aa)) is disordered. A compositionally biased stretch (low complexity) spans 60-75 (KSKAPQQKAATPPTAK). Polar residues-rich tracts occupy residues 97-109 (GFSN…THSA) and 117-127 (HPNQASSSGAQ). Over residues 129–154 (HEIHPEAAPRKNLRVRFDLPQDRLER) the composition is skewed to basic and acidic residues. The span at 174–191 (ATRQFRSPDSHLQGSDGT) shows a compositional bias: polar residues. Residues 203–215 (PSSSGSKIGDSDG) show a composition bias toward low complexity. 2 short sequence motifs (wxxxE) span residues 393–397 (WKIPE) and 829–833 (WQRFE). A disordered region spans residues 1461-1488 (QIGGSHTAPTGTPASAPGPTPASQTAAN). Low complexity predominate over residues 1467 to 1487 (TAPTGTPASAPGPTPASQTAA). The ERMRS motif lies at 1787 to 1790 (KKEG).

This sequence belongs to the AvrE family. As to quaternary structure, in planta interaction assays, interacts with the A.thaliana protein phosphatase 2A (PP2A) via direct interaction/association with specific B' regulatory subunits.

Its subcellular location is the secreted. It is found in the host cell. The protein resides in the host cell membrane. With respect to regulation, polyamidoamine dendrimers inhibit channel and virulence activities. Its function is as follows. Major virulence factor that may function as a water- and solute-permeable channel dedicated to creating osmotic/water potential perturbation and a water- and nutrient-rich apoplast in which bacteria multiply within the infected plant tissues. Expression in Xenopus oocytes results in inward and outward currents, permeability to water and osmolarity-dependent oocyte swelling and bursting. Functionally, elicits cell death in host tomato leaves and in non-host Nicotiana tabacum leaves. Acts within plant cells and promotes lesion formation. The combined action of AvrE and HopM1 is particularly important in promoting bacterial growth in plants. Contributes to the down-regulation of a specific subset of A.thaliana genes during infection, including NHL13, which is required for antibacterial immunity. This is Type III effector AvrE from Pseudomonas syringae pv. tomato (strain ATCC BAA-871 / DC3000).